Consider the following 265-residue polypeptide: Cytochrome b-c1 complex subunit Rieske, mitochondrial (265 aa).

Residues 1–53 (MLRVAGRRLSSSAARSSSTFFTRSSFTVTDDSSPARSPSPSLTSSFLDQIRGF) constitute a mitochondrion transit peptide. The Mitochondrial matrix portion of the chain corresponds to 54-102 (SSNSVSPAHQLGLVSDLPATVAAIKNPSSKIVYDDSNHERYPPGDPSKR). The helical transmembrane segment at 103-125 (AFAYFVLTGGRFVYASSVRLLIL) threads the bilayer. The Mitochondrial intermembrane segment spans residues 126–265 (KFVLSMSASK…FLEENKLLIG (140 aa)). The Rieske domain maps to 175–263 (IKLANSVDLG…YSFLEENKLL (89 aa)). Positions 208, 210, 227, and 230 each coordinate [2Fe-2S] cluster. A disulfide bridge connects residues Cys213 and Cys229.

Belongs to the Rieske iron-sulfur protein family. As to quaternary structure, component of the ubiquinol-cytochrome c oxidoreductase (cytochrome b-c1 complex, complex III, CIII), a multisubunit enzyme composed of 3 respiratory subunits cytochrome b, cytochrome c1 and Rieske protein, 2 core protein subunits, and several low-molecular weight protein subunits. The complex exists as an obligatory dimer and forms supercomplexes (SCs) in the inner mitochondrial membrane with cytochrome c oxidase (complex IV, CIV). The cofactor is [2Fe-2S] cluster.

The protein resides in the mitochondrion inner membrane. It catalyses the reaction a quinol + 2 Fe(III)-[cytochrome c](out) = a quinone + 2 Fe(II)-[cytochrome c](out) + 2 H(+)(out). In terms of biological role, component of the ubiquinol-cytochrome c oxidoreductase, a multisubunit transmembrane complex that is part of the mitochondrial electron transport chain which drives oxidative phosphorylation. The respiratory chain contains 3 multisubunit complexes succinate dehydrogenase (complex II, CII), ubiquinol-cytochrome c oxidoreductase (cytochrome b-c1 complex, complex III, CIII) and cytochrome c oxidase (complex IV, CIV), that cooperate to transfer electrons derived from NADH and succinate to molecular oxygen, creating an electrochemical gradient over the inner membrane that drives transmembrane transport and the ATP synthase. The cytochrome b-c1 complex catalyzes electron transfer from ubiquinol to cytochrome c, linking this redox reaction to translocation of protons across the mitochondrial inner membrane, with protons being carried across the membrane as hydrogens on the quinol. In the process called Q cycle, 2 protons are consumed from the matrix, 4 protons are released into the intermembrane space and 2 electrons are passed to cytochrome c. The Rieske protein is a catalytic core subunit containing a [2Fe-2S] iron-sulfur cluster. It cycles between 2 conformational states during catalysis to transfer electrons from the quinol bound in the Q(0) site in cytochrome b to cytochrome c1. The polypeptide is Cytochrome b-c1 complex subunit Rieske, mitochondrial (FES1) (Solanum tuberosum (Potato)).